Reading from the N-terminus, the 102-residue chain is Large ribosomal subunit protein uL24 (102 aa).

This sequence belongs to the universal ribosomal protein uL24 family. Part of the 50S ribosomal subunit.

Functionally, one of two assembly initiator proteins, it binds directly to the 5'-end of the 23S rRNA, where it nucleates assembly of the 50S subunit. In terms of biological role, one of the proteins that surrounds the polypeptide exit tunnel on the outside of the subunit. The polypeptide is Large ribosomal subunit protein uL24 (Ralstonia pickettii (strain 12J)).